The following is a 121-amino-acid chain: Large ribosomal subunit protein uL22c (121 aa).

This sequence belongs to the universal ribosomal protein uL22 family. As to quaternary structure, part of the 50S ribosomal subunit.

Its subcellular location is the plastid. The protein localises to the chloroplast. Its function is as follows. This protein binds specifically to 23S rRNA. The globular domain of the protein is located near the polypeptide exit tunnel on the outside of the subunit, while an extended beta-hairpin is found that lines the wall of the exit tunnel in the center of the 70S ribosome. In Lemna minor (Common duckweed), this protein is Large ribosomal subunit protein uL22c (rpl22).